The chain runs to 527 residues: Low-affinity Na(+)/H(+) antiporter NhaS1 (527 aa).

11 helical membrane passes run 18-38 (FLIV…VPIL), 41-61 (IPYT…DVKL), 94-114 (WFPI…GIAF), 126-146 (IAFL…IALF), 169-189 (VAVV…TFDL), 196-216 (FVTV…SLSL), 240-260 (ILAE…GMVL), 276-296 (IVSI…FLLI), 311-331 (LILI…FGLS), 352-372 (TVLW…LSVP), and 380-400 (AIID…GLTT).

It belongs to the monovalent cation:proton antiporter 1 (CPA1) transporter (TC 2.A.36) family.

The protein localises to the cell membrane. Na(+)/H(+) antiporter that extrudes sodium in exchange for external protons. Might be able to function at relatively high concentrations of Na(+) ions. Also has Li(+)/H(+) antiport activity under K(+)-rich conditions, but it might not have any physiological relevance. The polypeptide is Low-affinity Na(+)/H(+) antiporter NhaS1 (nhaS1) (Synechocystis sp. (strain ATCC 27184 / PCC 6803 / Kazusa)).